We begin with the raw amino-acid sequence, 163 residues long: Putative MucR family transcriptional regulatory protein RA0938 (163 aa).

The protein belongs to the ros/MucR family.

This Rhizobium meliloti (strain 1021) (Ensifer meliloti) protein is Putative MucR family transcriptional regulatory protein RA0938.